The chain runs to 263 residues: 1-(5-phosphoribosyl)-5-[(5-phosphoribosylamino)methylideneamino] imidazole-4-carboxamide isomerase (263 aa).

The protein belongs to the HisA/HisF family.

The protein resides in the cytoplasm. It catalyses the reaction 1-(5-phospho-beta-D-ribosyl)-5-[(5-phospho-beta-D-ribosylamino)methylideneamino]imidazole-4-carboxamide = 5-[(5-phospho-1-deoxy-D-ribulos-1-ylimino)methylamino]-1-(5-phospho-beta-D-ribosyl)imidazole-4-carboxamide. Its pathway is amino-acid biosynthesis; L-histidine biosynthesis; L-histidine from 5-phospho-alpha-D-ribose 1-diphosphate: step 4/9. The protein is 1-(5-phosphoribosyl)-5-[(5-phosphoribosylamino)methylideneamino] imidazole-4-carboxamide isomerase (HIS6) of Eremothecium gossypii (strain ATCC 10895 / CBS 109.51 / FGSC 9923 / NRRL Y-1056) (Yeast).